The primary structure comprises 123 residues: Small ribosomal subunit protein uS12 (123 aa).

The interval 9 to 32 (ANPREVQKSRKKVPALQQSPQKRG) is disordered. At aspartate 89 the chain carries 3-methylthioaspartic acid.

It belongs to the universal ribosomal protein uS12 family. In terms of assembly, part of the 30S ribosomal subunit. Contacts proteins S8 and S17. May interact with IF1 in the 30S initiation complex.

Its function is as follows. With S4 and S5 plays an important role in translational accuracy. Functionally, interacts with and stabilizes bases of the 16S rRNA that are involved in tRNA selection in the A site and with the mRNA backbone. Located at the interface of the 30S and 50S subunits, it traverses the body of the 30S subunit contacting proteins on the other side and probably holding the rRNA structure together. The combined cluster of proteins S8, S12 and S17 appears to hold together the shoulder and platform of the 30S subunit. The chain is Small ribosomal subunit protein uS12 from Bradyrhizobium sp. (strain BTAi1 / ATCC BAA-1182).